Here is a 146-residue protein sequence, read N- to C-terminus: NADH-quinone oxidoreductase subunit A (146 aa).

Helical transmembrane passes span 14 to 34 (FAVF…GAFF), 66 to 86 (FYLV…LYAW), and 96 to 116 (VGFI…VYLV).

It belongs to the complex I subunit 3 family. As to quaternary structure, NDH-1 is composed of 13 different subunits. Subunits NuoA, H, J, K, L, M, N constitute the membrane sector of the complex.

The protein resides in the cell inner membrane. It carries out the reaction a quinone + NADH + 5 H(+)(in) = a quinol + NAD(+) + 4 H(+)(out). NDH-1 shuttles electrons from NADH, via FMN and iron-sulfur (Fe-S) centers, to quinones in the respiratory chain. The immediate electron acceptor for the enzyme in this species is believed to be ubiquinone. Couples the redox reaction to proton translocation (for every two electrons transferred, four hydrogen ions are translocated across the cytoplasmic membrane), and thus conserves the redox energy in a proton gradient. This Serratia proteamaculans (strain 568) protein is NADH-quinone oxidoreductase subunit A.